The chain runs to 159 residues: Urease accessory protein UreE (159 aa).

Residues 140–159 (GAYHGTGHHHHGHGHDPHHG) are disordered.

This sequence belongs to the UreE family.

The protein localises to the cytoplasm. Its function is as follows. Involved in urease metallocenter assembly. Binds nickel. Probably functions as a nickel donor during metallocenter assembly. This Sinorhizobium fredii (strain NBRC 101917 / NGR234) protein is Urease accessory protein UreE.